The following is a 242-amino-acid chain: MAGHSKWANIQHKKARQDAKRGKIFTRLIKEITVAARMGGGDPGANPRLRLALEKAAENNMPKDNVQRAIDKGTGNLEGVEYIELRYEGYGIGGAALMVDCLTDNKTRTVADVRHAFTKNGGNLGTDGCVAFNFVHQGYLVFEPGVDEDALMEAALEAGAEDVVTNDDGSIEVITAPNDWAGVKSALEAAGYKSVDGDVTMRAQNETELSGDDAVKMQKLIDALEDLDDVQDVYTSAVLNLD.

This sequence belongs to the TACO1 family.

It is found in the cytoplasm. This chain is Probable transcriptional regulatory protein NMA1902, found in Neisseria meningitidis serogroup A / serotype 4A (strain DSM 15465 / Z2491).